The chain runs to 313 residues: Elongation factor Ts (313 aa).

An involved in Mg(2+) ion dislocation from EF-Tu region spans residues 82–85 (TDFV).

The protein belongs to the EF-Ts family.

The protein localises to the cytoplasm. Associates with the EF-Tu.GDP complex and induces the exchange of GDP to GTP. It remains bound to the aminoacyl-tRNA.EF-Tu.GTP complex up to the GTP hydrolysis stage on the ribosome. The protein is Elongation factor Ts of Nostoc sp. (strain PCC 7120 / SAG 25.82 / UTEX 2576).